Reading from the N-terminus, the 204-residue chain is U1 small nuclear ribonucleoprotein C (204 aa).

A Matrin-type zinc finger spans residues 4–36 (FFCDYCDVYLTHDSMSVRKAHNSGRNHLRNVVD). The disordered stretch occupies residues 65–204 (ANPMLPQNQP…GAGAPGHEKR (140 aa)). Pro residues-rich tracts occupy residues 77-154 (GFPP…PGAP) and 166-192 (APPPFPGLPGMPPPGQGFPPGGPPGFA).

The protein belongs to the U1 small nuclear ribonucleoprotein C family. U1 snRNP is composed of the 7 core Sm proteins B/B', D1, D2, D3, E, F and G that assemble in a heptameric protein ring on the Sm site of the small nuclear RNA to form the core snRNP, and at least 3 U1 snRNP-specific proteins U1-70K, U1-A and U1-C. U1-C interacts with U1 snRNA and the 5' splice-site region of the pre-mRNA.

The protein localises to the nucleus. Component of the spliceosomal U1 snRNP, which is essential for recognition of the pre-mRNA 5' splice-site and the subsequent assembly of the spliceosome. U1-C is directly involved in initial 5' splice-site recognition for both constitutive and regulated alternative splicing. The interaction with the 5' splice-site seems to precede base-pairing between the pre-mRNA and the U1 snRNA. Stimulates commitment or early (E) complex formation by stabilizing the base pairing of the 5' end of the U1 snRNA and the 5' splice-site region. This is U1 small nuclear ribonucleoprotein C from Fusarium vanettenii (strain ATCC MYA-4622 / CBS 123669 / FGSC 9596 / NRRL 45880 / 77-13-4) (Fusarium solani subsp. pisi).